A 261-amino-acid chain; its full sequence is Putative hydro-lyase SH0274 (261 aa).

Belongs to the D-glutamate cyclase family.

The chain is Putative hydro-lyase SH0274 from Staphylococcus haemolyticus (strain JCSC1435).